Consider the following 255-residue polypeptide: Putative SET domain-containing protein L678 (255 aa).

Positions 5 to 176 constitute an SET domain; sequence NRISEVFIKK…TGEELTDNYV (172 aa). The disordered stretch occupies residues 235-255; that stretch reads LQQNSKNLKKNPKKTIKATPK.

Belongs to the class V-like SAM-binding methyltransferase superfamily.

The sequence is that of Putative SET domain-containing protein L678 from Acanthamoeba polyphaga mimivirus (APMV).